A 346-amino-acid chain; its full sequence is S-adenosylmethionine:tRNA ribosyltransferase-isomerase (346 aa).

The protein belongs to the QueA family. Monomer.

It is found in the cytoplasm. The enzyme catalyses 7-aminomethyl-7-carbaguanosine(34) in tRNA + S-adenosyl-L-methionine = epoxyqueuosine(34) in tRNA + adenine + L-methionine + 2 H(+). It participates in tRNA modification; tRNA-queuosine biosynthesis. Functionally, transfers and isomerizes the ribose moiety from AdoMet to the 7-aminomethyl group of 7-deazaguanine (preQ1-tRNA) to give epoxyqueuosine (oQ-tRNA). The polypeptide is S-adenosylmethionine:tRNA ribosyltransferase-isomerase (Nitrosomonas eutropha (strain DSM 101675 / C91 / Nm57)).